The primary structure comprises 159 residues: Mating-type P-specific polypeptide Pi (159 aa).

A DNA-binding region (homeobox; TALE-type; partial) is located at residues 103–159 (MTTVRGQCSKCTKPHLMRWLLLHYDNPYPSNSEFYDLSAATGLTRTQLRNWFSNRRR).

Belongs to the TALE/M-ATYP homeobox family.

It localises to the nucleus. In terms of biological role, mating type proteins are sequence specific DNA-binding proteins that act as master switches in yeast differentiation by controlling gene expression in a cell type-specific fashion. Required for meiosis, but plays no role in conjugation. This chain is Mating-type P-specific polypeptide Pi (matPi), found in Schizosaccharomyces kambucha (Fission yeast).